The following is a 433-amino-acid chain: Trigger factor (433 aa).

A PPIase FKBP-type domain is found at 163–248 (GDVVVLDFAA…VHAVKERRLP (86 aa)).

The protein belongs to the FKBP-type PPIase family. Tig subfamily.

The protein resides in the cytoplasm. It catalyses the reaction [protein]-peptidylproline (omega=180) = [protein]-peptidylproline (omega=0). Functionally, involved in protein export. Acts as a chaperone by maintaining the newly synthesized protein in an open conformation. Functions as a peptidyl-prolyl cis-trans isomerase. The sequence is that of Trigger factor from Nitratidesulfovibrio vulgaris (strain ATCC 29579 / DSM 644 / CCUG 34227 / NCIMB 8303 / VKM B-1760 / Hildenborough) (Desulfovibrio vulgaris).